Here is a 146-residue protein sequence, read N- to C-terminus: Globin-1 (146 aa).

The Globin domain maps to 9-146 (QLTADVKKDL…KLVAVVQAAL (138 aa)). H101 provides a ligand contact to heme b.

This sequence belongs to the globin family. In terms of assembly, homodimer.

It is found in the cytoplasm. The sequence is that of Globin-1 from Anadara broughtonii (Blood clam).